The following is a 216-amino-acid chain: Transmembrane emp24 domain-containing protein eca (216 aa).

The signal sequence occupies residues M1–G20. Topologically, residues L21–S182 are lumenal. Residues R30 to V126 form the GOLD domain. The stretch at A134–N164 forms a coiled coil. A helical transmembrane segment spans residues R183–M203. Residues R204–V216 lie on the Cytoplasmic side of the membrane. A Prevents secretion from ER motif is present at residues K213–V216.

Belongs to the EMP24/GP25L family.

Its subcellular location is the endoplasmic reticulum membrane. Functionally, eca and bai are essential, though not redundant, for dorsoventral patterning of the embryo. Specifically required during early embryogenesis for the activity of maternal tkv, while the zygotic tkv is not affected. Involved in Golgi organization. This chain is Transmembrane emp24 domain-containing protein eca, found in Drosophila simulans (Fruit fly).